We begin with the raw amino-acid sequence, 403 residues long: MTDATTVHPLYDTYNRAALRFERGEGIWLITEDGERYIDFAAGIAVNSLGHSHPHLVETLKTQAEKLWHLSNVYEIPAQEKLGRRLVESTFADKVFFTNSGAEALECAIKTARRYQYVSGHPERFRIITFEGAFHGRTLATIAAGGQAKYLEGFGPKVEGFDQVPFGDEAALRAAITPETAGILLEPIQGEGGLRAFPEEFLRLVRQICDENGLLLLLDEVQTGVGRTGKLFAHEWAGIRPDIMAIAKGIGGGFPIGACLATAEAAKGMTAGMHGTTYGGNPLGMAVGNAVLDVVLADGFMENVQATALVMKQGLASLVDRYPNVVSEIRGRGLLMGLKCVVPNTSLIQALRDEHILSVGAGDNVVRLLPPLITTPEEAREALKHIETAVERLSIANPISKTV.

Residues 101-102 (GA) and F134 contribute to the pyridoxal 5'-phosphate site. R137 provides a ligand contact to N(2)-acetyl-L-ornithine. A pyridoxal 5'-phosphate-binding site is contributed by 219 to 222 (DEVQ). K248 is modified (N6-(pyridoxal phosphate)lysine). T276 contributes to the N(2)-acetyl-L-ornithine binding site. A pyridoxal 5'-phosphate-binding site is contributed by T277.

Belongs to the class-III pyridoxal-phosphate-dependent aminotransferase family. ArgD subfamily. Homodimer. The cofactor is pyridoxal 5'-phosphate.

Its subcellular location is the cytoplasm. The catalysed reaction is N(2)-acetyl-L-ornithine + 2-oxoglutarate = N-acetyl-L-glutamate 5-semialdehyde + L-glutamate. It functions in the pathway amino-acid biosynthesis; L-arginine biosynthesis; N(2)-acetyl-L-ornithine from L-glutamate: step 4/4. This is Acetylornithine aminotransferase from Brucella melitensis biotype 1 (strain ATCC 23456 / CCUG 17765 / NCTC 10094 / 16M).